A 325-amino-acid polypeptide reads, in one-letter code: Sensor histidine kinase YxdK (325 aa).

Residues 1–8 are Cytoplasmic-facing; the sequence is MKLFLRSH. The helical transmembrane segment at 9–29 threads the bilayer; that stretch reads AVLILLFLLQGLFVFFYYWFA. Topologically, residues 30-33 are extracellular; that stretch reads GLHS. Residues 34 to 54 form a helical membrane-spanning segment; that stretch reads FSHLFYILGVQLLILAGYLAY. Residues 55–325 are Cytoplasmic-facing; sequence RWYKDRGVYH…SVRFSFLTKM (271 aa). Residues 118–325 enclose the Histidine kinase domain; that stretch reads QWVHQVKTPL…SVRFSFLTKM (208 aa). At His121 the chain carries Phosphohistidine; by autocatalysis.

Its subcellular location is the cell membrane. It carries out the reaction ATP + protein L-histidine = ADP + protein N-phospho-L-histidine.. Its function is as follows. Probable member of the two-component regulatory system YxdK/YxdJ. May activate YxdJ in response to the antibacterial protein LL-37. This is Sensor histidine kinase YxdK (yxdK) from Bacillus subtilis (strain 168).